A 241-amino-acid chain; its full sequence is ATP synthase subunit a (241 aa).

Transmembrane regions (helical) follow at residues 30–50 (GQVF…VVVG), 91–111 (FIGT…LVPW), 128–148 (INTT…AGLS), 193–213 (LVVA…VMFL), and 214–234 (GLFT…YYIG).

Belongs to the ATPase A chain family. F-type ATPases have 2 components, CF(1) - the catalytic core - and CF(0) - the membrane proton channel. CF(1) has five subunits: alpha(3), beta(3), gamma(1), delta(1), epsilon(1). CF(0) has four main subunits: a, b, b' and c.

Its subcellular location is the cellular thylakoid membrane. Its function is as follows. Key component of the proton channel; it plays a direct role in the translocation of protons across the membrane. This chain is ATP synthase subunit a, found in Prochlorococcus marinus (strain MIT 9211).